The following is a 284-amino-acid chain: BTB/POZ domain-containing protein 2 (284 aa).

Positions 37 to 108 (SDTTLIIKGE…LYCDSPRIPA (72 aa)) constitute a BTB domain.

As to quaternary structure, interacts with cul3.

The protein resides in the cytoplasm. Its subcellular location is the nucleus. It functions in the pathway protein modification; protein ubiquitination. In terms of biological role, probable substrate-specific adapter of an E3 ubiquitin-protein ligase complex which mediates the ubiquitination and subsequent proteasomal degradation of target proteins. The polypeptide is BTB/POZ domain-containing protein 2 (btb2) (Schizosaccharomyces pombe (strain 972 / ATCC 24843) (Fission yeast)).